A 354-amino-acid chain; its full sequence is Histidinol-phosphate aminotransferase (354 aa).

Lys-222 carries the post-translational modification N6-(pyridoxal phosphate)lysine.

The protein belongs to the class-II pyridoxal-phosphate-dependent aminotransferase family. Histidinol-phosphate aminotransferase subfamily. Homodimer. The cofactor is pyridoxal 5'-phosphate.

It carries out the reaction L-histidinol phosphate + 2-oxoglutarate = 3-(imidazol-4-yl)-2-oxopropyl phosphate + L-glutamate. Its pathway is amino-acid biosynthesis; L-histidine biosynthesis; L-histidine from 5-phospho-alpha-D-ribose 1-diphosphate: step 7/9. This chain is Histidinol-phosphate aminotransferase, found in Staphylococcus carnosus (strain TM300).